The primary structure comprises 159 residues: Heat shock protein beta-9 (159 aa).

A sHSP domain is found at 36–147 (LLRDSPAAQE…EAQTGPSPRL (112 aa)).

This sequence belongs to the small heat shock protein (HSP20) family. As to expression, testis specific.

It localises to the cytoplasm. The protein localises to the nucleus. This chain is Heat shock protein beta-9 (HSPB9), found in Homo sapiens (Human).